Reading from the N-terminus, the 401-residue chain is Golgi membrane protein 1 (401 aa).

At Met1 the chain carries N-acetylmethionine. The Cytoplasmic portion of the chain corresponds to 1–12 (MMGLGNGRRSMK). A helical; Signal-anchor for type II membrane protein transmembrane segment spans residues 13 to 35 (SPPLVLAALVACIIVLGFNYWIA). Residues 36–401 (SSRSVDLQTR…DQREKRNHTL (366 aa)) are Lumenal-facing. Residues 40–205 (VDLQTRIMEL…QRQQLQALSE (166 aa)) adopt a coiled-coil conformation. The N-linked (GlcNAc...) (complex) asparagine glycan is linked to Asn109. An N-linked (GlcNAc...) asparagine glycan is attached at Asn144. The tract at residues 178 to 401 (TKKGNEAVAS…DQREKRNHTL (224 aa)) is disordered. Phosphoserine is present on Ser187. Polar residues predominate over residues 228–238 (LGNSKSQTPAP). 2 stretches are compositionally biased toward basic and acidic residues: residues 244–255 (LDSKRQVEKEET) and 264–285 (EPQRDRLPQEPGREQVVEDRPV). Over residues 286 to 295 (GGRGFGGAGE) the composition is skewed to gly residues. A compositionally biased stretch (polar residues) spans 298–312 (QTPQVQAALSVSQEN). At Ser309 the chain carries Phosphoserine; by FAM20C. Residues 350–360 (DYNMDENEAES) are compositionally biased toward acidic residues. A compositionally biased stretch (basic and acidic residues) spans 381–395 (EDQKRDTINLLDQRE). Asn398 carries an N-linked (GlcNAc...) asparagine glycan.

This sequence belongs to the GOLM family. In terms of assembly, interacts with DYM. Glycosylated. In terms of processing, phosphorylation sites are present in the extracellular medium. Widely expressed. Highly expressed in colon, prostate, trachea and stomach. Expressed at lower level in testis, muscle, lymphoid tissues, white blood cells and spleen. Predominantly expressed by cells of the epithelial lineage. Expressed at low level in normal liver. Expression significantly increases in virus (HBV, HCV) infected liver. Expression does not increase in liver disease due to non-viral causes (alcohol-induced liver disease, autoimmune hepatitis). Increased expression in hepatocytes appears to be a general feature of advanced liver disease. In liver tissue from patients with adult giant-cell hepatitis (GCH), it is strongly expressed in hepatocytes-derived syncytial giant cells. Constitutively expressed by biliary epithelial cells but not by hepatocytes.

The protein localises to the golgi apparatus. Its subcellular location is the cis-Golgi network membrane. Functionally, unknown. Cellular response protein to viral infection. The sequence is that of Golgi membrane protein 1 (GOLM1) from Homo sapiens (Human).